Consider the following 347-residue polypeptide: (RS)-norcoclaurine 6-O-methyltransferase (347 aa).

The S-adenosyl-L-methionine site is built by G192, D215, D235, M236, and K249. The active-site Proton acceptor is the H253.

Belongs to the class I-like SAM-binding methyltransferase superfamily. Cation-independent O-methyltransferase family. COMT subfamily. In terms of assembly, homodimer.

The catalysed reaction is norcoclaurine + S-adenosyl-L-methionine = coclaurine + S-adenosyl-L-homocysteine + H(+). It participates in alkaloid biosynthesis; (S)-reticuline biosynthesis; (S)-reticuline from (S)-norcoclaurine: step 1/4. Its function is as follows. Catalyzes the transfer of the S-methyl group of S-adenosyl-L-methionine (AdoMet) to the 6-hydroxyl group of norcoclaurine to form coclaurine. This chain is (RS)-norcoclaurine 6-O-methyltransferase, found in Coptis japonica (Japanese goldthread).